Reading from the N-terminus, the 445-residue chain is Phosphoglucosamine mutase (445 aa).

S102 (phosphoserine intermediate) is an active-site residue. Residues S102, D241, D243, and D245 each contribute to the Mg(2+) site. S102 carries the phosphoserine modification.

Belongs to the phosphohexose mutase family. Mg(2+) is required as a cofactor. Post-translationally, activated by phosphorylation.

The catalysed reaction is alpha-D-glucosamine 1-phosphate = D-glucosamine 6-phosphate. Functionally, catalyzes the conversion of glucosamine-6-phosphate to glucosamine-1-phosphate. This Shigella dysenteriae serotype 1 (strain Sd197) protein is Phosphoglucosamine mutase.